The primary structure comprises 268 residues: tRNA (guanine-N(1)-)-methyltransferase (268 aa).

S-adenosyl-L-methionine contacts are provided by residues Gly110 and 129 to 134 (IGDFVM). The segment at 246–268 (WGAPPAPVKRHRKRRPETTESAS) is disordered.

The protein belongs to the RNA methyltransferase TrmD family. Homodimer.

Its subcellular location is the cytoplasm. It carries out the reaction guanosine(37) in tRNA + S-adenosyl-L-methionine = N(1)-methylguanosine(37) in tRNA + S-adenosyl-L-homocysteine + H(+). Functionally, specifically methylates guanosine-37 in various tRNAs. This is tRNA (guanine-N(1)-)-methyltransferase from Deinococcus deserti (strain DSM 17065 / CIP 109153 / LMG 22923 / VCD115).